A 75-amino-acid polypeptide reads, in one-letter code: MPQKSRYSDEQVEQLLAELVSVLEKHHTPTDLSLMVLGNMVTNLINTSIAPAQRMLIADSFVHALRASIDEGNIH.

It belongs to the UPF0352 family.

In Proteus mirabilis (strain HI4320), this protein is UPF0352 protein PMI0824.